The sequence spans 235 residues: Ribitol-5-phosphate cytidylyltransferase (235 aa).

Residues 7 to 10, 82 to 88, and Ser-113 each bind CTP; these read LAGG and GADRNTS.

The protein belongs to the IspD/TarI cytidylyltransferase family. TarI subfamily.

It catalyses the reaction D-ribitol 5-phosphate + CTP + H(+) = CDP-L-ribitol + diphosphate. Its pathway is cell wall biogenesis; poly(ribitol phosphate) teichoic acid biosynthesis. Catalyzes the transfer of the cytidylyl group of CTP to D-ribitol 5-phosphate. In Streptococcus pneumoniae (strain Hungary19A-6), this protein is Ribitol-5-phosphate cytidylyltransferase.